Consider the following 146-residue polypeptide: 3-dehydroquinate dehydratase (146 aa).

Tyrosine 22 acts as the Proton acceptor in catalysis. Substrate-binding residues include asparagine 73, histidine 79, and aspartate 86. Histidine 99 serves as the catalytic Proton donor. Substrate is bound by residues 100–101 (IS) and arginine 110.

The protein belongs to the type-II 3-dehydroquinase family. Homododecamer.

The enzyme catalyses 3-dehydroquinate = 3-dehydroshikimate + H2O. Its pathway is metabolic intermediate biosynthesis; chorismate biosynthesis; chorismate from D-erythrose 4-phosphate and phosphoenolpyruvate: step 3/7. In terms of biological role, catalyzes a trans-dehydration via an enolate intermediate. The chain is 3-dehydroquinate dehydratase from Prochlorococcus marinus (strain MIT 9515).